The chain runs to 159 residues: Small ribosomal subunit protein uS9 (159 aa).

The protein belongs to the universal ribosomal protein uS9 family.

The sequence is that of Small ribosomal subunit protein uS9 from Methylocella silvestris (strain DSM 15510 / CIP 108128 / LMG 27833 / NCIMB 13906 / BL2).